Here is a 247-residue protein sequence, read N- to C-terminus: ATP synthase subunit a, chloroplastic (247 aa).

The next 5 helical transmembrane spans lie at 38 to 58 (QVLI…IIAV), 95 to 115 (VPFI…GALL), 133 to 153 (DINT…YAGL), 199 to 219 (LVVV…VMFL), and 220 to 240 (GLFT…AYIG).

This sequence belongs to the ATPase A chain family. In terms of assembly, F-type ATPases have 2 components, CF(1) - the catalytic core - and CF(0) - the membrane proton channel. CF(1) has five subunits: alpha(3), beta(3), gamma(1), delta(1), epsilon(1). CF(0) has four main subunits: a, b, b' and c.

The protein resides in the plastid. It is found in the chloroplast thylakoid membrane. Key component of the proton channel; it plays a direct role in the translocation of protons across the membrane. This chain is ATP synthase subunit a, chloroplastic, found in Phalaenopsis aphrodite subsp. formosana (Moth orchid).